Reading from the N-terminus, the 250-residue chain is 5'-nucleotidase SurE (250 aa).

A divalent metal cation-binding residues include aspartate 8, aspartate 9, serine 39, and asparagine 95.

Belongs to the SurE nucleotidase family. The cofactor is a divalent metal cation.

The protein localises to the cytoplasm. The enzyme catalyses a ribonucleoside 5'-phosphate + H2O = a ribonucleoside + phosphate. Nucleotidase that shows phosphatase activity on nucleoside 5'-monophosphates. In Cupriavidus necator (strain ATCC 17699 / DSM 428 / KCTC 22496 / NCIMB 10442 / H16 / Stanier 337) (Ralstonia eutropha), this protein is 5'-nucleotidase SurE.